The following is a 768-amino-acid chain: P-selectin (768 aa).

An N-terminal signal peptide occupies residues 1–41; it reads MAGCPKGSWTPRLRSVILGGAQLIWFSALISELVNQKEVAA. At 42-709 the chain is on the extracellular side; it reads WTYNYSTKAY…QAGTLTIQEA (668 aa). Positions 58 to 158 constitute a C-type lectin domain; it reads VFCRRHFTDL…PCFKRKRALC (101 aa). 21 cysteine pairs are disulfide-bonded: Cys-60–Cys-158, Cys-131–Cys-150, Cys-163–Cys-174, Cys-168–Cys-183, Cys-185–Cys-194, Cys-200–Cys-244, Cys-230–Cys-257, Cys-262–Cys-306, Cys-292–Cys-319, Cys-324–Cys-368, Cys-354–Cys-381, Cys-386–Cys-430, Cys-416–Cys-443, Cys-448–Cys-492, Cys-478–Cys-505, Cys-510–Cys-554, Cys-540–Cys-567, Cys-580–Cys-624, Cys-610–Cys-637, Cys-642–Cys-686, and Cys-672–Cys-699. Residues Glu-121, Asn-123, and Asn-124 each contribute to the Ca(2+) site. Asn-123 lines the a carbohydrate pocket. The a carbohydrate site is built by Glu-133 and Asn-146. Residues Asn-146 and Asp-147 each contribute to the Ca(2+) site. An EGF-like domain is found at 159-195; it reads YTASCQDMSCSNQGECIETIGSYTCSCYPGFYGPECE. Sushi domains lie at 198-259, 260-321, 322-383, 384-445, 446-507, 508-569, 578-639, and 640-701; these read KECG…KCDA, VQCQ…TCEA, IACE…FCEA, LQCP…ECQA, VSCA…TCEA, IKCP…TCKG, VRCP…MCRA, and VKCS…TCQA. The N-linked (GlcNAc...) asparagine glycan is linked to Asn-398. An N-linked (GlcNAc...) asparagine glycan is attached at Asn-603. N-linked (GlcNAc...) asparagine glycans are attached at residues Asn-654, Asn-661, and Asn-679. The chain crosses the membrane as a helical span at residues 710–733; it reads LTYLGGAVASTTGLAVGGTLLALL. Over 734-768 the chain is Cytoplasmic; the sequence is RKRLRKKDDGKCPLNPHSHLGTYGVFTNAAYDPTP. Cys-745 carries the S-palmitoyl cysteine; alternate lipid modification. Cys-745 carries S-stearoyl cysteine; alternate lipidation. Residues 756-759 carry the Endocytosis signal motif; it reads YGVF. The interval 759–768 is interaction with SNX17; that stretch reads FTNAAYDPTP.

The protein belongs to the selectin/LECAM family. Interacts with SNX17. Interacts with SELPLG/PSGL1 and PODXL2 and mediates neutrophil adhesion and leukocyte rolling. This interaction requires the sialyl-Lewis X epitope of SELPLG and PODXL2, and specific tyrosine sulfation on SELPLG. Interacts (via C-type lectin domain) with alpha-IIb/beta3 integrin ITGA2B:ITGB3 and alpha-V/beta-3 integrin ITGAV:ITGB3. Interacts with alpha5/beta1 integrin ITGA5:ITGB1 and alpha4/beta1 integrin ITGA4:ITGB. In terms of tissue distribution, stored in the alpha-granules of platelets and Weibel-Palade bodies of endothelial cells. Upon cell activation by agonists, P-selectin is transported rapidly to the cell surface.

Its subcellular location is the cell membrane. Functionally, ca(2+)-dependent receptor for myeloid cells that binds to carbohydrates on neutrophils and monocytes. Mediates the interaction of activated endothelial cells or platelets with leukocytes. The ligand recognized is sialyl-Lewis X. Mediates rapid rolling of leukocyte rolling over vascular surfaces during the initial steps in inflammation through interaction with SELPLG. Mediates cell-cell interactions and cell adhesion via the interaction with integrin alpha-IIb/beta3 (ITGA2B:ITGB3) and integrin alpha-V/beta-3 (ITGAV:ITGB3). In Mus musculus (Mouse), this protein is P-selectin (Selp).